Consider the following 373-residue polypeptide: Flagellar P-ring protein (373 aa).

The signal sequence occupies residues 1-28 (MPSVSAVILKLAAAALSALLLSGVAANA).

This sequence belongs to the FlgI family. As to quaternary structure, the basal body constitutes a major portion of the flagellar organelle and consists of four rings (L,P,S, and M) mounted on a central rod.

The protein resides in the periplasm. The protein localises to the bacterial flagellum basal body. Assembles around the rod to form the L-ring and probably protects the motor/basal body from shearing forces during rotation. The polypeptide is Flagellar P-ring protein (Rhodopseudomonas palustris (strain HaA2)).